The sequence spans 138 residues: Small ribosomal subunit protein uS11 (138 aa).

Residues 1–12 (MPPKKAAASSAK) show a composition bias toward low complexity. Positions 1 to 28 (MPPKKAAASSAKKGQKTRRREKKNVPHG) are disordered. Over residues 13 to 22 (KGQKTRRREK) the composition is skewed to basic residues.

The protein belongs to the universal ribosomal protein uS11 family. Part of the 30S ribosomal subunit. Interacts with proteins S7 and S18. Binds to IF-3.

Functionally, located on the platform of the 30S subunit, it bridges several disparate RNA helices of the 16S rRNA. Forms part of the Shine-Dalgarno cleft in the 70S ribosome. This chain is Small ribosomal subunit protein uS11, found in Mycobacterium sp. (strain JLS).